The sequence spans 621 residues: Putative zinc metalloprotease CPn_0344/CP_0416/CPj0344/CpB0350 (621 aa).

Zn(2+) is bound at residue histidine 20. Glutamate 21 is an active-site residue. Zn(2+) is bound at residue histidine 24. Helical transmembrane passes span 103 to 125 (ILVL…SILY), 561 to 583 (VLNL…WEIV), and 596 to 613 (ILVP…FLTF).

This sequence belongs to the peptidase M50B family. The cofactor is Zn(2+).

The protein resides in the cell inner membrane. In Chlamydia pneumoniae (Chlamydophila pneumoniae), this protein is Putative zinc metalloprotease CPn_0344/CP_0416/CPj0344/CpB0350.